We begin with the raw amino-acid sequence, 93 residues long: Protein FptB (93 aa).

Residues 1-25 form the signal peptide; that stretch reads MPRQSGFGWAWRVPLALAGSLAAAT. 2 helical membrane passes run 44 to 64 and 71 to 91; these read LYAGLFGALGVGLLLLVGGLL and FAWRLGGSLLVLGLALWLLAG.

Its subcellular location is the cell membrane. Its function is as follows. May play some role in transport of Fe(3+)-pyochelin. This Pseudomonas aeruginosa (strain ATCC 15692 / DSM 22644 / CIP 104116 / JCM 14847 / LMG 12228 / 1C / PRS 101 / PAO1) protein is Protein FptB (fptB).